Here is a 395-residue protein sequence, read N- to C-terminus: Elongation factor Tu (395 aa).

A tr-type G domain is found at 10-204 (KPHVNIGTIG…AVDSYIPTPQ (195 aa)). Residues 19-26 (GHVDHGKT) are G1. 19 to 26 (GHVDHGKT) contacts GTP. Thr26 is a Mg(2+) binding site. Residues 60 to 64 (GITIN) are G2. The tract at residues 81–84 (DCPG) is G3. Residues 81-85 (DCPGH) and 136-139 (NKCD) contribute to the GTP site. The interval 136–139 (NKCD) is G4. Residues 174–176 (SAL) form a G5 region.

It belongs to the TRAFAC class translation factor GTPase superfamily. Classic translation factor GTPase family. EF-Tu/EF-1A subfamily. In terms of assembly, monomer.

It is found in the cytoplasm. It carries out the reaction GTP + H2O = GDP + phosphate + H(+). GTP hydrolase that promotes the GTP-dependent binding of aminoacyl-tRNA to the A-site of ribosomes during protein biosynthesis. This is Elongation factor Tu from Symbiobacterium thermophilum (strain DSM 24528 / JCM 14929 / IAM 14863 / T).